The primary structure comprises 1063 residues: Cation efflux system protein CzcA (1063 aa).

Helical transmembrane passes span 14-29 (WLVL…LGIF), 350-370 (GAVL…AALI), 452-472 (LIFG…LTGV), 487-507 (ALLG…ALFI), 534-554 (LANT…CVAI), 883-903 (VVVP…FNNI), 906-926 (GLLV…ALWI), 937-957 (VGFI…LSFI), 982-1004 (VLMT…GTGA), and 1013-1033 (VVIG…PVLY). Positions 1040 to 1063 (DEDAEDTREPVTQTHQPDQGRQPA) are disordered. Over residues 1049-1063 (PVTQTHQPDQGRQPA) the composition is skewed to polar residues.

Belongs to the resistance-nodulation-cell division (RND) (TC 2.A.6) family.

It localises to the cell membrane. In terms of biological role, has a low cation transport activity for cobalt, it is essential for the expression of cobalt, zinc, and cadmium resistance. CzcA and CzcB together would act in zinc efflux nearly as effectively as the complete CZC efflux system (CzcABC). This Alcaligenes sp. (strain CT14) protein is Cation efflux system protein CzcA (czcA).